We begin with the raw amino-acid sequence, 101 residues long: MKMERLERTAVEAQLTELSGWALNDAGSSISKTFKFANFVEAFGFMTQAALAAEKLNHHPEWFNVYSRVDVTLNTHDAGGLTELDFKLAKAMEKAAARGVV.

This sequence belongs to the pterin-4-alpha-carbinolamine dehydratase family.

It catalyses the reaction (4aS,6R)-4a-hydroxy-L-erythro-5,6,7,8-tetrahydrobiopterin = (6R)-L-erythro-6,7-dihydrobiopterin + H2O. This is Putative pterin-4-alpha-carbinolamine dehydratase from Rhizobium johnstonii (strain DSM 114642 / LMG 32736 / 3841) (Rhizobium leguminosarum bv. viciae).